Here is a 295-residue protein sequence, read N- to C-terminus: G1/S-specific cyclin-D1 (295 aa).

One can recognise a Cyclin N-terminal domain in the interval 28 to 152 (LRAMLKAEET…LLVNKLKWNL (125 aa)). The disordered stretch occupies residues 262–295 (AQQNMDPKAAEEEEEEEEEVDLACTPTDVRDVDI). Lys269 participates in a covalent cross-link: Glycyl lysine isopeptide (Lys-Gly) (interchain with G-Cter in ubiquitin). The segment covering 272-282 (EEEEEEEEEVD) has biased composition (acidic residues). Thr286 is modified (phosphothreonine).

This sequence belongs to the cyclin family. Cyclin D subfamily. Interacts with either CDK4 or CDK6 protein kinase to form a serine/threonine kinase holoenzyme complex. The cyclin subunit imparts substrate specificity to the complex. Component of the ternary complex CCND1/CDK4/CDKN1B required for nuclear translocation and modulation of CDK4-mediated kinase activity. Interacts directly with CDKN1B. Can form similar complexes with either CDKN1A or CDKN2A. Interacts with UHRF2; the interaction ubiquitinates CCND1 and appears to occur independently of phosphorylation. Interacts with USP2. Interacts (via cyclin N-terminal domain) with INSM1 (via N-terminal region); the interaction competes with the binding of CCND1 to CDK4 during cell cycle progression and inhibits CDK4 activity. Interacts with CDK4; the interaction is prevented with the binding of CCND1 to INSM1 during cell cycle progression. In terms of processing, phosphorylation at Thr-286 by MAP kinases is required for ubiquitination and degradation by the DCX(AMBRA1) complex. It also plays an essential role for recognition by the FBXO31 component of SCF (SKP1-cullin-F-box) protein ligase complex following DNA damage. Ubiquitinated at Lys-269 by the DCX(AMBRA1) complex during the transition from G1 to S cell phase, leading to its degradation: ubiquitination is dependent on Thr-286 phosphorylation. The DCX(AMBRA1) complex represents the major regulator of CCND1 stability during the G1/S transition. Also ubiquitinated by the SCF(FBXO4) and Cul7-RING(FBXW8) ubiquitin-protein ligase complexes. Following DNA damage it is ubiquitinated by the SCF(FBXO31) protein ligase complex. SCF(FBXO31) ubiquitination is dependent on Thr-286 phosphorylation. Ubiquitinated also by UHRF2 apparently in a phosphorylation-independent manner. Ubiquitination leads to its degradation and G1 arrest. Deubiquitinated by USP2; leading to its stabilization.

It is found in the nucleus. Its subcellular location is the cytoplasm. The protein resides in the nucleus membrane. Regulatory component of the cyclin D1-CDK4 (DC) complex that phosphorylates and inhibits members of the retinoblastoma (RB) protein family including RB1 and regulates the cell-cycle during G(1)/S transition. Phosphorylation of RB1 allows dissociation of the transcription factor E2F from the RB/E2F complex and the subsequent transcription of E2F target genes which are responsible for the progression through the G(1) phase. Hypophosphorylates RB1 in early G(1) phase. Cyclin D-CDK4 complexes are major integrators of various mitogenenic and antimitogenic signals. Also a substrate for SMAD3, phosphorylating SMAD3 in a cell-cycle-dependent manner and repressing its transcriptional activity. Component of the ternary complex, cyclin D1/CDK4/CDKN1B, required for nuclear translocation and activity of the cyclin D-CDK4 complex. Exhibits transcriptional corepressor activity with INSM1 on the NEUROD1 and INS promoters in a cell cycle-independent manner. The protein is G1/S-specific cyclin-D1 of Homo sapiens (Human).